The chain runs to 225 residues: PKHD-type hydroxylase YbiX (225 aa).

The region spanning threonine 78 to serine 177 is the Fe2OG dioxygenase domain. Residues histidine 96, aspartate 98, and histidine 158 each coordinate Fe cation. Arginine 168 contacts 2-oxoglutarate.

The cofactor is Fe(2+). Requires L-ascorbate as cofactor.

This Escherichia coli (strain K12 / DH10B) protein is PKHD-type hydroxylase YbiX.